A 115-amino-acid polypeptide reads, in one-letter code: SOSS complex subunit C homolog (115 aa).

It belongs to the SOSS-C family.

In Drosophila mojavensis (Fruit fly), this protein is SOSS complex subunit C homolog.